We begin with the raw amino-acid sequence, 1131 residues long: Homeobox-DDT domain protein RLT3 (1131 aa).

A DNA-binding region (homeobox; TALE-type) is located at residues 2–56 (KRKSPLQVQALEGFYLEQMYPTPKEMEDLGKSLGLTLKEVRGWFKRRRSRGKGVK). Basic residues predominate over residues 239–251 (LQKRSTEKKRRSI). Residues 239-264 (LQKRSTEKKRRSIHREAELNKDETQR) are disordered. Over residues 252–264 (HREAELNKDETQR) the composition is skewed to basic and acidic residues. A DDT domain is found at 365-424 (PESVKKLFKVVHFLYTYSVTLDIGPFTLDEFTRAFHDKDSLLLGKIHLSLLKLLLLDVET). The interval 579–609 (EDPDKSQSDSDDSGSVDDESDDCSISSGDEI) is disordered. A compositionally biased stretch (acidic residues) spans 587–600 (DSDDSGSVDDESDD).

The protein localises to the nucleus. In terms of biological role, transcriptional regulator required for the maintenance of the plant vegetative phase. May prevent the early activation of the vegetative-to-reproductive transition by regulating key genes that contribute to flower timing. The chain is Homeobox-DDT domain protein RLT3 from Arabidopsis thaliana (Mouse-ear cress).